The sequence spans 254 residues: Glutamate racemase (254 aa).

Substrate is bound by residues 10–11 and 42–43; these read DS and YG. C73 functions as the Proton donor/acceptor in the catalytic mechanism. Substrate is bound at residue 74 to 75; that stretch reads NT. Residue C183 is the Proton donor/acceptor of the active site. 184–185 contacts substrate; the sequence is TH.

This sequence belongs to the aspartate/glutamate racemases family.

The catalysed reaction is L-glutamate = D-glutamate. The protein operates within cell wall biogenesis; peptidoglycan biosynthesis. In terms of biological role, provides the (R)-glutamate required for cell wall biosynthesis. The polypeptide is Glutamate racemase (Herpetosiphon aurantiacus (strain ATCC 23779 / DSM 785 / 114-95)).